Here is an 84-residue protein sequence, read N- to C-terminus: Small ribosomal subunit protein uS17 (84 aa).

The protein belongs to the universal ribosomal protein uS17 family. As to quaternary structure, part of the 30S ribosomal subunit.

Its function is as follows. One of the primary rRNA binding proteins, it binds specifically to the 5'-end of 16S ribosomal RNA. The sequence is that of Small ribosomal subunit protein uS17 from Clostridioides difficile (strain 630) (Peptoclostridium difficile).